Here is a 364-residue protein sequence, read N- to C-terminus: MPHPYPALTPEQKKELADIAHRIVAPGKGILAADESTGSIAKRLQSIGTENTEENRRFYRQLLLTADDRVNPCIGGVILFHETLYQKADDGRPFPQVIKSKGGVVGIKVDKGVVPLAGTNGETTTQGLDGLSERCAQYKKDGADFAKWRCVLKIGEHTPSSLAIMENANVLARYASICQQNGIVPIVEPEILPDGDHDLKRCQYVTEKVLAAVYKALSDHHVYLEGTLLKPNMVTPGHACTQKFSNEEIAMATVTALRRTVPPAVPGVTFLSGGQSEEEASINLNAINKCPLLKPWALTFSYGRALQASALKAWGGKKENLKAAQEEYIKRALANSLACQGKYTPSGQSGAAASESLFISNHAY.

A Phosphotyrosine modification is found at Y5. A Phosphothreonine modification is found at T9. Residues S36 and S39 each carry the phosphoserine modification. An N6-acetyllysine; alternate modification is found at K42. A Glycyl lysine isopeptide (Lys-Gly) (interchain with G-Cter in SUMO1); alternate cross-link involves residue K42. Residue K42 forms a Glycyl lysine isopeptide (Lys-Gly) (interchain with G-Cter in SUMO2); alternate linkage. R43 contributes to the beta-D-fructose 1,6-bisphosphate binding site. S46 carries the post-translational modification Phosphoserine. An N6-(2-hydroxyisobutyryl)lysine modification is found at K99. K108 is modified (N6-acetyllysine). Residue K111 is modified to N6-acetyllysine; alternate. Residue K111 is modified to N6-malonyllysine; alternate. S132 carries the phosphoserine modification. K147 bears the N6-(2-hydroxyisobutyryl)lysine mark. E188 serves as the catalytic Proton acceptor. The Schiff-base intermediate with dihydroxyacetone-P role is filled by K230. A Phosphoserine modification is found at S272. Residues 272-274, S301, and R304 each bind beta-D-fructose 1,6-bisphosphate; that span reads SGG. Position 312 is an N6-malonyllysine (K312). K330 is modified (N6-acetyllysine).

The protein belongs to the class I fructose-bisphosphate aldolase family. As to quaternary structure, homotetramer. Interacts with SNX9 and WAS. Interacts with FBP2; the interaction blocks FBP2 inhibition by physiological concentrations of AMP and reduces inhibition by Ca(2+). In terms of tissue distribution, expressed in muscle, brain and hepatoma cells.

The protein resides in the cytoplasm. It is found in the myofibril. Its subcellular location is the sarcomere. It localises to the i band. The protein localises to the m line. It catalyses the reaction beta-D-fructose 1,6-bisphosphate = D-glyceraldehyde 3-phosphate + dihydroxyacetone phosphate. It participates in carbohydrate degradation; glycolysis; D-glyceraldehyde 3-phosphate and glycerone phosphate from D-glucose: step 4/4. Functionally, catalyzes the reversible conversion of beta-D-fructose 1,6-bisphosphate (FBP) into two triose phosphate and plays a key role in glycolysis and gluconeogenesis. In addition, may also function as scaffolding protein. This is Fructose-bisphosphate aldolase A (Aldoa) from Rattus norvegicus (Rat).